A 472-amino-acid chain; its full sequence is N(6)-adenine-specific methyltransferase METTL4 (472 aa).

It belongs to the MT-A70-like family.

Its subcellular location is the nucleus. The protein resides in the cytoplasm. It localises to the cytosol. It is found in the mitochondrion matrix. It carries out the reaction a 2'-O-methyladenosine in U2 snRNA + S-adenosyl-L-methionine = an N(6)-methyl-2'-O-methyladenosine in U2 snRNA + S-adenosyl-L-homocysteine + H(+). The enzyme catalyses a 2'-deoxyadenosine in DNA + S-adenosyl-L-methionine = an N(6)-methyl-2'-deoxyadenosine in DNA + S-adenosyl-L-homocysteine + H(+). N(6)-adenine-specific methyltransferase that can methylate both RNAs and DNA. Acts as a N(6)-adenine-specific RNA methyltransferase by catalyzing formation of N6,2'-O-dimethyladenosine (m6A(m)) on internal positions of U2 small nuclear RNA (snRNA): methylates the 6th position of adenine residues with a pre-deposited 2'-O-methylation. Internal m6A(m) methylation of snRNAs regulates RNA splicing. Also able to act as a N(6)-adenine-specific DNA methyltransferase by mediating methylation of DNA on the 6th position of adenine (N(6)-methyladenosine). The existence of N(6)-methyladenosine (m6A) on DNA is however unclear in mammals, and additional evidences are required to confirm the role of the N(6)-adenine-specific DNA methyltransferase activity of METTL4 in vivo. Acts as a regulator of mitochondrial transcript levels and mitochondrial DNA (mtDNA) copy number by mediating mtDNA N(6)-methylation: m6A on mtDNA reduces transcription by repressing TFAM DNA-binding and bending. N(6)-methyladenosine deposition by METTL4 regulates Polycomb silencing by triggering ubiquitination and degradation of sensor proteins ASXL1 and MPND, leading to inactivation of the PR-DUB complex and subsequent preservation of Polycomb silencing. This chain is N(6)-adenine-specific methyltransferase METTL4, found in Homo sapiens (Human).